A 147-amino-acid chain; its full sequence is MQDQLICSGCRRVVQYRRGVAGVCCPGCNTLTAVNPSAVADMSELICSGCPTLLFYNRGASNIRCPSCNRLNSTRSANQIAHLTCGQCRTTLMHPPGASTVQCATCRYVNHVRDARPQTVLVENPKTLDDKGKLVSNVVVGVTSWKR.

Putative zinc finger stretches follow at residues 4-34 (QLIC…LTAV), 44-74 (ELIC…LNST), and 82-112 (HLTC…VNHV).

The protein resides in the nucleus. Functionally, putative zinc finger that may be involved in programmed cell death and defense response. This chain is Protein LOL4 (LOL4), found in Oryza sativa subsp. japonica (Rice).